We begin with the raw amino-acid sequence, 121 residues long: Basic phospholipase A2 homolog 2 (121 aa).

Disulfide bonds link C26–C115, C28–C44, C43–C95, C49–C121, C50–C88, C57–C81, and C75–C86. The segment at 105–117 (KKYRYHLKPLCKK) is important for membrane-damaging activities in eukaryotes and bacteria; heparin-binding.

It belongs to the phospholipase A2 family. Group II subfamily. K49 sub-subfamily. As to quaternary structure, homodimer; non-covalently linked (probable alternative/compact dimer conformation in solution). As to expression, expressed by the venom gland.

It localises to the secreted. In terms of biological role, snake venom phospholipase A2 homolog that lacks enzymatic activity. Is myotoxic and displays edema-inducing activities in mouse paw. Also displays cytotoxic activity against myotubes. A model of myotoxic mechanism has been proposed: an apo Lys49-PLA2 is activated by the entrance of a hydrophobic molecule (e.g. fatty acid) at the hydrophobic channel of the protein leading to a reorientation of a monomer. This reorientation causes a transition between 'inactive' to 'active' states, causing alignment of C-terminal and membrane-docking sites (MDoS) side-by-side and putting the membrane-disruption sites (MDiS) in the same plane, exposed to solvent and in a symmetric position for both monomers. The MDoS region stabilizes the toxin on membrane by the interaction of charged residues with phospholipid head groups. Subsequently, the MDiS region destabilizes the membrane with penetration of hydrophobic residues. This insertion causes a disorganization of the membrane, allowing an uncontrolled influx of ions (i.e. calcium and sodium), and eventually triggering irreversible intracellular alterations and cell death. The polypeptide is Basic phospholipase A2 homolog 2 (Bothrops brazili (Brazil's lancehead)).